The chain runs to 388 residues: Succinate--CoA ligase [ADP-forming] subunit beta (388 aa).

The ATP-grasp domain occupies 9–244 (KQLFKEFGLP…PSQDDAREAE (236 aa)). Residues K46, 53–55 (GRG), E99, T102, and E107 each bind ATP. The Mg(2+) site is built by N199 and D213. Substrate is bound by residues N264 and 321 to 323 (GIV).

It belongs to the succinate/malate CoA ligase beta subunit family. In terms of assembly, heterotetramer of two alpha and two beta subunits. Mg(2+) is required as a cofactor.

The catalysed reaction is succinate + ATP + CoA = succinyl-CoA + ADP + phosphate. The enzyme catalyses GTP + succinate + CoA = succinyl-CoA + GDP + phosphate. Its pathway is carbohydrate metabolism; tricarboxylic acid cycle; succinate from succinyl-CoA (ligase route): step 1/1. In terms of biological role, succinyl-CoA synthetase functions in the citric acid cycle (TCA), coupling the hydrolysis of succinyl-CoA to the synthesis of either ATP or GTP and thus represents the only step of substrate-level phosphorylation in the TCA. The beta subunit provides nucleotide specificity of the enzyme and binds the substrate succinate, while the binding sites for coenzyme A and phosphate are found in the alpha subunit. This is Succinate--CoA ligase [ADP-forming] subunit beta from Idiomarina loihiensis (strain ATCC BAA-735 / DSM 15497 / L2-TR).